The sequence spans 222 residues: Glutathione S-transferase A2 (222 aa).

Alanine 2 carries the post-translational modification N-acetylalanine. The GST N-terminal domain occupies 3–83 (GKPVLHYFNA…YIATKYDLYG (81 aa)). The residue at position 4 (lysine 4) is an N6-succinyllysine. Glutathione-binding positions include tyrosine 9, lysine 45, 54–55 (QV), and 67–68 (QT). A GST C-terminal domain is found at 85 to 208 (DMKERALIDM…HPGSQRKPPL (124 aa)).

Belongs to the GST superfamily. Alpha family. In terms of assembly, homodimer. Heterodimer of GSTA1 and GSTA2. As to expression, expressed in the kidney.

The catalysed reaction is RX + glutathione = an S-substituted glutathione + a halide anion + H(+). In terms of biological role, catalyzes the conjugation of glutathione to a large variety of electrophilic compounds. The polypeptide is Glutathione S-transferase A2 (Gsta2) (Mus musculus (Mouse)).